A 257-amino-acid chain; its full sequence is Imidazole glycerol phosphate synthase subunit HisF (257 aa).

Catalysis depends on residues D11 and D130.

The protein belongs to the HisA/HisF family. In terms of assembly, heterodimer of HisH and HisF.

It localises to the cytoplasm. The catalysed reaction is 5-[(5-phospho-1-deoxy-D-ribulos-1-ylimino)methylamino]-1-(5-phospho-beta-D-ribosyl)imidazole-4-carboxamide + L-glutamine = D-erythro-1-(imidazol-4-yl)glycerol 3-phosphate + 5-amino-1-(5-phospho-beta-D-ribosyl)imidazole-4-carboxamide + L-glutamate + H(+). Its pathway is amino-acid biosynthesis; L-histidine biosynthesis; L-histidine from 5-phospho-alpha-D-ribose 1-diphosphate: step 5/9. In terms of biological role, IGPS catalyzes the conversion of PRFAR and glutamine to IGP, AICAR and glutamate. The HisF subunit catalyzes the cyclization activity that produces IGP and AICAR from PRFAR using the ammonia provided by the HisH subunit. In Actinobacillus succinogenes (strain ATCC 55618 / DSM 22257 / CCUG 43843 / 130Z), this protein is Imidazole glycerol phosphate synthase subunit HisF.